Reading from the N-terminus, the 115-residue chain is Holo-[acyl-carrier-protein] synthase (115 aa).

Mg(2+) contacts are provided by D5 and E51.

This sequence belongs to the P-Pant transferase superfamily. AcpS family. Mg(2+) serves as cofactor.

It is found in the cytoplasm. It carries out the reaction apo-[ACP] + CoA = holo-[ACP] + adenosine 3',5'-bisphosphate + H(+). Its function is as follows. Transfers the 4'-phosphopantetheine moiety from coenzyme A to a Ser of acyl-carrier-protein. The protein is Holo-[acyl-carrier-protein] synthase of Helicobacter acinonychis (strain Sheeba).